Here is a 40-residue protein sequence, read N- to C-terminus: Bomanin Short 6 (40 aa).

The signal sequence occupies residues 1 to 18 (MKLLSITFLFGLLALASA). A propeptide spans 19–23 (NPLSP) (removed by a dipeptidylpeptidase). A disulfide bridge links C32 with C35.

It belongs to the bomanin family.

The protein resides in the secreted. Secreted immune-induced peptide induced by Toll signaling. Has a role in resistance to bacterial and fungal infections. The strength of antimicrobial activity appears to correlate with the overall level of expression. The sequence is that of Bomanin Short 6 from Drosophila melanogaster (Fruit fly).